Consider the following 287-residue polypeptide: Hydroxyethylthiazole kinase (287 aa).

Residue methionine 50 participates in substrate binding. 2 residues coordinate ATP: arginine 126 and serine 185. Glycine 212 is a substrate binding site.

It belongs to the Thz kinase family. The cofactor is Mg(2+).

It carries out the reaction 5-(2-hydroxyethyl)-4-methylthiazole + ATP = 4-methyl-5-(2-phosphooxyethyl)-thiazole + ADP + H(+). It functions in the pathway cofactor biosynthesis; thiamine diphosphate biosynthesis; 4-methyl-5-(2-phosphoethyl)-thiazole from 5-(2-hydroxyethyl)-4-methylthiazole: step 1/1. Its function is as follows. Catalyzes the phosphorylation of the hydroxyl group of 4-methyl-5-beta-hydroxyethylthiazole (THZ). This chain is Hydroxyethylthiazole kinase, found in Methanobrevibacter smithii (strain ATCC 35061 / DSM 861 / OCM 144 / PS).